Reading from the N-terminus, the 179-residue chain is uncharacterized protein (179 aa).

The signal sequence occupies residues 1-19 (MNTNVFRLLLLGSLFSLSA). C20 is lipidated: N-palmitoyl cysteine. Residue C20 is the site of S-diacylglycerol cysteine attachment.

The protein resides in the cell membrane. This is an uncharacterized protein from Escherichia coli (strain K12).